We begin with the raw amino-acid sequence, 281 residues long: Pantothenate synthetase (281 aa).

30-37 is an ATP binding site; sequence MGNLHQGH. The Proton donor role is filled by H37. Q61 is a (R)-pantoate binding site. Q61 contributes to the beta-alanine binding site. Position 149–152 (149–152) interacts with ATP; sequence GNKD. (R)-pantoate is bound at residue Q155. ATP-binding positions include I178 and 186-189; that span reads MSSR.

Belongs to the pantothenate synthetase family. Homodimer.

The protein resides in the cytoplasm. It catalyses the reaction (R)-pantoate + beta-alanine + ATP = (R)-pantothenate + AMP + diphosphate + H(+). It functions in the pathway cofactor biosynthesis; (R)-pantothenate biosynthesis; (R)-pantothenate from (R)-pantoate and beta-alanine: step 1/1. In terms of biological role, catalyzes the condensation of pantoate with beta-alanine in an ATP-dependent reaction via a pantoyl-adenylate intermediate. This chain is Pantothenate synthetase, found in Shewanella baltica (strain OS223).